A 204-amino-acid polypeptide reads, in one-letter code: MTDTIKIGVGGPVGAGKHELIEKIVKRLAKDMSIGVITNDIYTKEDEKILVNSGVLPEDRIIGVETGGCPHTAIREDASMNFAAIDELKERNDDIELIFIESGGDNLAATFSPELVDFSIYIIDVAQGEKIPRKGGQGMIKSDFFVINKTDLAPYVGASLERMAEDTKVFRGNRPFTFTNLKTDEGLDEVIEWIEQYVFLKGLA.

11–18 (GPVGAGKH) is a binding site for GTP.

This sequence belongs to the SIMIBI class G3E GTPase family. UreG subfamily. As to quaternary structure, homodimer. UreD, UreF and UreG form a complex that acts as a GTP-hydrolysis-dependent molecular chaperone, activating the urease apoprotein by helping to assemble the nickel containing metallocenter of UreC. The UreE protein probably delivers the nickel.

The protein resides in the cytoplasm. Its function is as follows. Facilitates the functional incorporation of the urease nickel metallocenter. This process requires GTP hydrolysis, probably effectuated by UreG. The sequence is that of Urease accessory protein UreG from Staphylococcus xylosus.